Here is a 247-residue protein sequence, read N- to C-terminus: Transmembrane protein 33 (247 aa).

Residue A2 is modified to N-acetylalanine. The Lumenal portion of the chain corresponds to 2-31 (ADTTPNGPQGAGAVQFMMTNKLDTAMWLSR). The chain crosses the membrane as a helical span at residues 32–52 (LFTVYCSALFVLPLLGLHEAA). The Cytoplasmic segment spans residues 53 to 100 (SFYQRALLANALTSALRLHQRLPHFQLSRAFLAQALLEDSCHYLLYSL). The chain crosses the membrane as a helical span at residues 101 to 121 (IFVNSYPVTMSIFPVLLFSLL). Residues 122-155 (HAATYTKKVLDAKGSNSLPLLRSVLDKLSTNQQN) lie on the Lumenal side of the membrane. Residues 156 to 176 (ILKFIACNEIFLMPATVFMLF) traverse the membrane as a helical segment. The Cytoplasmic portion of the chain corresponds to 177–247 (SGQGSLLQPF…FISRLAPTVA (71 aa)).

It belongs to the PER33/POM33 family. In terms of assembly, interacts with EIF2AK3. Interacts with ARL6IP1, isoform RTN1-A of RTN1, isoform RTN2-B of RTN2, isoform 3 of RTN3 and isoform 3 of RTN4. Interacts with RNF5. Interacts with RNF26. Interacts with PKD2. In terms of tissue distribution, highly expressed in the liver and significantly in brain, lungs and kidneys.

The protein resides in the endoplasmic reticulum membrane. Its subcellular location is the melanosome. It is found in the nucleus envelope. Functionally, acts as a regulator of the tubular endoplasmic reticulum (ER) network by modulating intracellular calcium homeostasis. Mechanistically, stimulates PKD2 calcium-dependent activity. Suppresses the RTN3/4-induced formation of the ER tubules. Positively regulates PERK-mediated and IRE1-mediated unfolded protein response signaling. Plays an essential role in VEGF-mediated release of Ca(2+) from ER stores during angiogenesis. Also plays a role in the modulation of innate immune signaling through the cGAS-STING pathway by interacting with RNF26. Participates in lipid metabolism by acting as a downstream effector of the pyruvate kinase/PKM. Forms a complex with RNF5 to facilitate polyubiquitination and subsequent degradation of SCAP on the ER membrane. This Rattus norvegicus (Rat) protein is Transmembrane protein 33 (Tmem33).